Here is a 444-residue protein sequence, read N- to C-terminus: Magnesium transporter MRS2-F (444 aa).

Residues Phe-128 to Met-155 are disordered. Polar residues predominate over residues Leu-145–Met-155. The stretch at Val-195 to Leu-258 forms a coiled coil. A helical membrane pass occupies residues Gly-370–Phe-390. The Required for magnesium transport activity signature appears at Gly-391–Asn-393. Residues Phe-415–Gly-435 traverse the membrane as a helical segment.

The protein belongs to the CorA metal ion transporter (MIT) (TC 1.A.35.5) family.

It is found in the membrane. In terms of biological role, magnesium transporter that may mediate the influx of magnesium. This Oryza sativa subsp. indica (Rice) protein is Magnesium transporter MRS2-F (MRS2-F).